Here is a 294-residue protein sequence, read N- to C-terminus: uncharacterized protein (294 aa).

Residues 1–19 form the signal peptide; that stretch reads MFKRSLFILLLLAASLVKA.

This is an uncharacterized protein from Rickettsia felis (strain ATCC VR-1525 / URRWXCal2) (Rickettsia azadi).